The sequence spans 568 residues: Periplasmic trehalase (568 aa).

Positions M1–A38 are cleaved as a signal peptide. Residues R169, W176–D177, N213, R222–Q224, R294–E296, and G327 contribute to the substrate site. Active-site proton donor/acceptor residues include D329 and E511. Residue E526 participates in substrate binding.

It belongs to the glycosyl hydrolase 37 family.

The protein resides in the periplasm. The enzyme catalyses alpha,alpha-trehalose + H2O = alpha-D-glucose + beta-D-glucose. Provides the cells with the ability to utilize trehalose at high osmolarity by splitting it into glucose molecules that can subsequently be taken up by the phosphotransferase-mediated uptake system. This chain is Periplasmic trehalase, found in Xanthomonas campestris pv. campestris (strain 8004).